The following is a 193-amino-acid chain: Large ribosomal subunit protein bL9 (193 aa).

The segment at 155 to 193 (AEGETLTSAEAIYDIQEKPLAENQEEMNDNDANSINEQA) is disordered. Residues 184–193 (NDANSINEQA) are compositionally biased toward polar residues.

The protein belongs to the bacterial ribosomal protein bL9 family.

Binds to the 23S rRNA. This chain is Large ribosomal subunit protein bL9, found in Bartonella quintana (strain Toulouse) (Rochalimaea quintana).